Here is a 465-residue protein sequence, read N- to C-terminus: ILERGDALLVVQWNIRAFTGVKKWPWMELYFEIEPLLKSAEAEKEMAAMKEEFGRIKESLEKSEARRKELEEKMVSLLQEKNDLQLQVQAEQDNLNDAEERCDQLIKNKIQLEAKVKEMNERLEDEEEMNAELTAKKRKLEDECSELKKDIDDLELTLAKVEKEKHATENKVKNLTEEMAGLDEIIAKLTKEKKALQEAHQQALDDLQAEEDKVNTLTKAKLKLEQQVDDLEGSLEQEKKVRMDLERAKRKLEGDLKLTQESIMDLENDKQQLEERLKKKEFDISQLNSKIEDEQALVLQLQKKLKENQARIEELEEELEAERTARAKVEKLRSDLSRELEEISERLEEAGGATSVQIEMNKKREAEFQKMRRDLEEATLQHEATASALRRKHADSVAELGEQIDNLQRVKQKLEKEKSEFKLELDDVTSNMEQIIKAKANLEKVSRTLEDQANEYRRKLEEAQR.

Residues 1-35 (ILERGDALLVVQWNIRAFTGVKKWPWMELYFEIEP) form the Myosin motor domain. Residues 36-465 (LLKSAEAEKE…YRRKLEEAQR (430 aa)) are a coiled coil. 2 positions are modified to phosphoserine: S285 and S334. Y456 carries the post-translational modification Phosphotyrosine.

Muscle myosin is a hexameric protein that consists of 2 heavy chain subunits (MHC), 2 alkali light chain subunits (MLC) and 2 regulatory light chain subunits (MLC-2).

Its subcellular location is the cytoplasm. It localises to the myofibril. Functionally, muscle contraction. The chain is Myosin-6 (MYH6) from Oryctolagus cuniculus (Rabbit).